Here is a 453-residue protein sequence, read N- to C-terminus: Bifunctional protein GlmU (453 aa).

The segment at 1 to 227 is pyrophosphorylase; sequence MTQDIVILAA…EAEVAGVNDR (227 aa). UDP-N-acetyl-alpha-D-glucosamine contacts are provided by residues 8-11, Lys22, Gln73, 78-79, 100-102, Gly137, Glu152, Asn167, and Asn225; these read LAAG, GT, and YGD. Residue Asp102 coordinates Mg(2+). Position 225 (Asn225) interacts with Mg(2+). The interval 228 to 248 is linker; that stretch reads VQLAALERELQNQQAVSLMQN. The interval 249–453 is N-acetyltransferase; the sequence is GATLLDPSRI…KDNWPRPIKK (205 aa). Residues Arg331 and Lys349 each coordinate UDP-N-acetyl-alpha-D-glucosamine. The active-site Proton acceptor is His361. UDP-N-acetyl-alpha-D-glucosamine is bound by residues Tyr364 and Asn375. Acetyl-CoA-binding positions include Ala378, 384 to 385, Ser403, Ala421, and Arg438; that span reads NY.

It in the N-terminal section; belongs to the N-acetylglucosamine-1-phosphate uridyltransferase family. The protein in the C-terminal section; belongs to the transferase hexapeptide repeat family. Homotrimer. Requires Mg(2+) as cofactor.

The protein localises to the cytoplasm. It catalyses the reaction alpha-D-glucosamine 1-phosphate + acetyl-CoA = N-acetyl-alpha-D-glucosamine 1-phosphate + CoA + H(+). The catalysed reaction is N-acetyl-alpha-D-glucosamine 1-phosphate + UTP + H(+) = UDP-N-acetyl-alpha-D-glucosamine + diphosphate. It functions in the pathway nucleotide-sugar biosynthesis; UDP-N-acetyl-alpha-D-glucosamine biosynthesis; N-acetyl-alpha-D-glucosamine 1-phosphate from alpha-D-glucosamine 6-phosphate (route II): step 2/2. It participates in nucleotide-sugar biosynthesis; UDP-N-acetyl-alpha-D-glucosamine biosynthesis; UDP-N-acetyl-alpha-D-glucosamine from N-acetyl-alpha-D-glucosamine 1-phosphate: step 1/1. Its pathway is bacterial outer membrane biogenesis; LPS lipid A biosynthesis. Functionally, catalyzes the last two sequential reactions in the de novo biosynthetic pathway for UDP-N-acetylglucosamine (UDP-GlcNAc). The C-terminal domain catalyzes the transfer of acetyl group from acetyl coenzyme A to glucosamine-1-phosphate (GlcN-1-P) to produce N-acetylglucosamine-1-phosphate (GlcNAc-1-P), which is converted into UDP-GlcNAc by the transfer of uridine 5-monophosphate (from uridine 5-triphosphate), a reaction catalyzed by the N-terminal domain. This is Bifunctional protein GlmU from Marinomonas sp. (strain MWYL1).